A 175-amino-acid chain; its full sequence is Sialidase 85-1.3 (175 aa).

The protein belongs to the glycosyl hydrolase 33 family.

The catalysed reaction is Hydrolysis of alpha-(2-&gt;3)-, alpha-(2-&gt;6)-, alpha-(2-&gt;8)- glycosidic linkages of terminal sialic acid residues in oligosaccharides, glycoproteins, glycolipids, colominic acid and synthetic substrates.. Its function is as follows. Developmentally regulated neuraminidase implicated in parasite invasion of cells. May contribute to the pathology during T.cruzi infection by cleaving sialic acid from cells of the immune system. In Trypanosoma cruzi, this protein is Sialidase 85-1.3 (SA85-1.3).